Here is a 640-residue protein sequence, read N- to C-terminus: Probable potassium transport system protein Kup 1 (640 aa).

The next 12 membrane-spanning stretches (helical) occupy residues 24–44, 67–87, 116–136, 154–174, 186–206, 222–242, 264–284, 296–316, 354–374, 382–402, 411–431, and 436–456; these read LGAL…TSPL, IASL…VLFV, VGPL…DGMI, PFFA…LFTI, FGPV…TEVV, TFLF…VLAV, WFAL…ALIL, MLVP…ATVI, IYIP…VVGF, AAYG…ALVV, LWLC…FLGA, and VTQG…LMAT.

It belongs to the HAK/KUP transporter (TC 2.A.72) family.

The protein resides in the cell inner membrane. The enzyme catalyses K(+)(in) + H(+)(in) = K(+)(out) + H(+)(out). Functionally, transport of potassium into the cell. Likely operates as a K(+):H(+) symporter. The chain is Probable potassium transport system protein Kup 1 from Paramagnetospirillum magneticum (strain ATCC 700264 / AMB-1) (Magnetospirillum magneticum).